Here is a 795-residue protein sequence, read N- to C-terminus: Phenylalanine--tRNA ligase beta subunit (795 aa).

The tRNA-binding domain maps to 39–148 (AGSFHGVVVG…ADAPIGTDIR (110 aa)). A B5 domain is found at 401–476 (PKRATITLRR…RVYGYNNIPD (76 aa)). Positions 454, 460, 463, and 464 each coordinate Mg(2+). The region spanning 701 to 794 (SRFPANRRDI…LKERFQASLR (94 aa)) is the FDX-ACB domain.

The protein belongs to the phenylalanyl-tRNA synthetase beta subunit family. Type 1 subfamily. As to quaternary structure, tetramer of two alpha and two beta subunits. Mg(2+) is required as a cofactor.

The protein resides in the cytoplasm. It carries out the reaction tRNA(Phe) + L-phenylalanine + ATP = L-phenylalanyl-tRNA(Phe) + AMP + diphosphate + H(+). The polypeptide is Phenylalanine--tRNA ligase beta subunit (Shigella boydii serotype 4 (strain Sb227)).